The sequence spans 478 residues: Catalase easC (478 aa).

Residue histidine 54 is part of the active site. Tyrosine 343 serves as a coordination point for heme. The interval 459 to 478 is disordered; sequence VAEKARPDSPSRAQPGQLRL.

Belongs to the catalase family. Heme is required as a cofactor.

It participates in alkaloid biosynthesis; ergot alkaloid biosynthesis. Catalase; part of the gene cluster that mediates the biosynthesis of fungal ergot alkaloid. DmaW catalyzes the first step of ergot alkaloid biosynthesis by condensing dimethylallyl diphosphate (DMAP) and tryptophan to form 4-dimethylallyl-L-tryptophan. The second step is catalyzed by the methyltransferase easF that methylates 4-dimethylallyl-L-tryptophan in the presence of S-adenosyl-L-methionine, resulting in the formation of 4-dimethylallyl-L-abrine. The catalase easC and the FAD-dependent oxidoreductase easE then transform 4-dimethylallyl-L-abrine to chanoclavine-I which is further oxidized by easD in the presence of NAD(+), resulting in the formation of chanoclavine-I aldehyde. Chanoclavine-I aldehyde is the precursor of ergoamides and ergopeptines in Clavicipitaceae, and clavine-type alcaloids such as fumiclavine in Trichocomaceae. However, the metabolites downstream of chanoclavine-I aldehyde in Arthrodermataceae have not been identified yet. The protein is Catalase easC of Arthroderma benhamiae (strain ATCC MYA-4681 / CBS 112371) (Trichophyton mentagrophytes).